Consider the following 392-residue polypeptide: Y' element ATP-dependent helicase YFL066C (392 aa).

Positions 1–175 (MADTPSVAVQ…LQRIGLTGLA (175 aa)) constitute a Helicase ATP-binding domain. 11–18 (APPGYGKT) contributes to the ATP binding site. One can recognise a Helicase C-terminal domain in the interval 232 to 381 (KLLLALFEIE…EFYGLESKKG (150 aa)).

The protein belongs to the helicase family. Yeast subtelomeric Y' repeat subfamily.

In terms of biological role, catalyzes DNA unwinding and is involved in telomerase-independent telomere maintenance. This is Y' element ATP-dependent helicase YFL066C from Saccharomyces cerevisiae (strain ATCC 204508 / S288c) (Baker's yeast).